The primary structure comprises 1382 residues: MRAPAVLAPGILVLLFTLVQRSCGECKEALVKSEMNVNMKYQLPNFTAETPIQNVVLHKHHIYLGAVNYIYVLNDKDLQKVAEYKTGPVLEHPDCSPCQDCSHKANLSGAVWKDNINMALLIDIYYDDQLISCGSVQRGTCQRHVLPRSNTADIQSEVHCMYSPQADEEPGQCPDCVVSALGTKVLISEKTRFINFFVGNTINSSSHPDHSLHSISVRRLKETQDGFKFLTDQSYIDVLPEFRDSYPIKYVHAFESNHFIYFLTVQRETLDAQTFHTRVIRFCSVDSGLHSYMEMPLECILTEKRRKRSTREEVFNILQAAYVGKPGAHLAKQIGANLNDDILYGVFARSQPDSAEPMNRSAVCAFPIKYVNEFFNKIVNKNNVRCLQHFYGPNHEHCFNRTLLRNSSGCEVRSDEYRTEFTTALQRVDLFMGQFNQVLLTSISTFIKGDLTIANLGTSEGRFMQVVVSRSGSSTPHVNFRLDSHPVSPEAIVEHPLNQNGYTLVVTGKKITKIPLNGLGCEHFQSCSQCLSAPPFVQCGWCHDKCVQLEECPTGTWTQEICLPTIYEVFPTSAPLEGGTMLTICGWDFGFRRNNKFDLKKTKVLLGNESCTLTLSESTTNMLKCTVGPAVNEHFNISIIIANGRGTAQYSKFSYVDPIITSISPSYGPKTGGTLLTLNGKYLNSGNSRHISIGGETCTLKSVSDSILECYTPAQTTPTEFPIKLKIDLANREMNSFSYQEDPIVYAIHPTKSFISGGSTITAIGKNLHSVSVLRMGINVHEARRNFTVACQHRSNSEIICCTTPSLQQLSLQLPLKTKAFFMLDGIHSKYFDLIYVHNPVFKPFEKPVMISIGNENVLEIKGNDIDPEAVKGEVLKVGNKSCETIYSDSEAVLCKVPNDLLKLNNELNIEWKQAVSSTILGKVIVQPDQNFTGLIVGVISISLIVLLLLGLFLWLKRRKQIKDLGSELVRYDARVHTPHLDRLVSARSVSPTTEMVSNESVDYRATFPEDQFPNSSQNGSCRQVQYPLTDLSPMLTSGDSDISSPLLQNTVHIDLSALNPELVQAVQHVVIGPSSLIVHFNEVIGRGHFGCVYHGTLLDNDDKKIHCAVKSLNRITDIGEVSQFLTEGIIMKDFSHPNVLSLLGICLRSEGSPLVVLPYMKHGDLRNFIRNETHNPTVKDLIGFGLQVAKGMKYLASKKFVHRDLAARNCMLDEKFTVKVADFGLARDMYDKEYYSVHNKTGAKLPVKWMALESLQTQKFTTKSDVWSFGVLLWELMTRGAPPYPDVNTFDITVYLLQGRRLLQPEYCPDPLYEVMLKCWHPKAELRPSFSELVSRISAIFSTFIGEHYVHVNATYVNVKCVAPYPSLLSSQDIIDGEGDT.

The N-terminal stretch at 1–24 (MRAPAVLAPGILVLLFTLVQRSCG) is a signal peptide. Residues 25–933 (ECKEALVKSE…VIVQPDQNFT (909 aa)) lie on the Extracellular side of the membrane. Residues 27–516 (KEALVKSEMN…TGKKITKIPL (490 aa)) form the Sema domain. The N-linked (GlcNAc...) asparagine glycan is linked to N45. Disulfide bonds link C95/C101, C98/C160, C133/C141, and C173/C176. The N-linked (GlcNAc...) asparagine glycan is linked to N106. 2 N-linked (GlcNAc...) asparagine glycosylation sites follow: N203 and N359. Disulfide bonds link C299–C364 and C386–C398. N400 and N406 each carry an N-linked (GlcNAc...) asparagine glycan. 4 disulfides stabilise this stretch: C521–C539, C527–C562, C530–C546, and C542–C552. IPT/TIG domains follow at residues 564–656 (PTIY…FSYV), 658–740 (PIIT…FSYQ), and 743–837 (PIVY…LIYV). The O-linked (Man) threonine glycan is linked to T583. 2 N-linked (GlcNAc...) asparagine glycosylation sites follow: N608 and N636. O-linked (Man) threonine glycans are attached at residues T677 and T762. 3 N-linked (GlcNAc...) asparagine glycosylation sites follow: N786, N880, and N931. The chain crosses the membrane as a helical span at residues 934–956 (GLIVGVISISLIVLLLLGLFLWL). At 957–1382 (KRRKQIKDLG…QDIIDGEGDT (426 aa)) the chain is on the cytoplasmic side. Phosphoserine is present on S967. Residue T978 is modified to Phosphothreonine. A phosphoserine mark is found at S991, S998, and S1001. Y1004 carries the post-translational modification Phosphotyrosine. The Protein kinase domain maps to 1079-1346 (VHFNEVIGRG…RISAIFSTFI (268 aa)). Residues 1085-1093 (IGRGHFGCV) and K1111 each bind ATP. D1205 acts as the Proton acceptor in catalysis. The interaction with RANBP9 stretch occupies residues 1213 to 1382 (LDEKFTVKVA…QDIIDGEGDT (170 aa)). Position 1231 is a phosphotyrosine (Y1231). Phosphotyrosine; by autocatalysis occurs at positions 1235 and 1236. T1290 is subject to Phosphothreonine. The segment at 1321-1360 (WHPKAELRPSFSELVSRISAIFSTFIGEHYVHVNATYVNV) is interaction with MUC20. A phosphotyrosine; by autocatalysis mark is found at Y1350 and Y1357. Y1366 carries the post-translational modification Phosphotyrosine.

Belongs to the protein kinase superfamily. Tyr protein kinase family. Heterodimer made of an alpha chain (50 kDa) and a beta chain (145 kDa) which are disulfide linked. Binds PLXNB1. Interacts when phosphorylated with downstream effectors including STAT3, PIK3R1, SRC, PCLG1, GRB2 and GAB1. Interacts with SPSB1, SPSB2 and SPSB4. Interacts with INPP5D/SHIP1. When phosphorylated at Tyr-1357, interacts with INPPL1/SHIP2. Interacts with RANBP9 and RANBP10, as well as SPSB1, SPSB2, SPSB3 and SPSB4. SPSB1 binding occurs in the presence and in the absence of HGF, however HGF treatment has a positive effect on this interaction. Interacts with MUC20; prevents interaction with GRB2 and suppresses hepatocyte growth factor-induced cell proliferation. Interacts with GRB10. Interacts with PTPN1 and PTPN2. Interacts with HSP90AA1 and HSP90AB1; the interaction suppresses MET kinase activity. Interacts with tensin TNS3. Interacts (when phosphorylated) with tensin TNS4 (via SH2 domain); the interaction increases MET protein stability by inhibiting MET endocytosis and subsequent lysosomal degradation. Autophosphorylated in response to ligand binding on Tyr-1235 and Tyr-1236 in the kinase domain leading to further phosphorylation of Tyr-1350 and Tyr-1357 in the C-terminal multifunctional docking site. Dephosphorylated by PTPRJ at Tyr-1350 and Tyr-1366. Dephosphorylated by PTPN1 and PTPN2. In terms of processing, ubiquitinated. Ubiquitination by CBL regulates the receptor stability and activity through proteasomal degradation. Post-translationally, O-mannosylation of IPT/TIG domains by TMEM260 is required for protein maturation. O-mannosylated residues are composed of single mannose glycans that are not elongated or modified.

It is found in the membrane. It carries out the reaction L-tyrosyl-[protein] + ATP = O-phospho-L-tyrosyl-[protein] + ADP + H(+). Its activity is regulated as follows. In its inactive state, the C-terminal tail interacts with the catalytic domain and inhibits the kinase activity. Upon ligand binding, the C-terminal tail is displaced and becomes phosphorylated, thus increasing the kinase activity. Receptor tyrosine kinase that transduces signals from the extracellular matrix into the cytoplasm by binding to hepatocyte growth factor/HGF ligand. Regulates many physiological processes including proliferation, scattering, morphogenesis and survival. Ligand binding at the cell surface induces autophosphorylation of MET on its intracellular domain that provides docking sites for downstream signaling molecules. Following activation by ligand, interacts with the PI3-kinase subunit PIK3R1, PLCG1, SRC, GRB2, STAT3 or the adapter GAB1. Recruitment of these downstream effectors by MET leads to the activation of several signaling cascades including the RAS-ERK, PI3 kinase-AKT, or PLCgamma-PKC. The RAS-ERK activation is associated with the morphogenetic effects while PI3K/AKT coordinates prosurvival effects. During embryonic development, MET signaling plays a role in gastrulation, development and migration of muscles and neuronal precursors, angiogenesis and kidney formation. In adults, participates in wound healing as well as organ regeneration and tissue remodeling. Also promotes differentiation and proliferation of hematopoietic cells. The sequence is that of Hepatocyte growth factor receptor (MET) from Mustela putorius furo (European domestic ferret).